The sequence spans 388 residues: MFSLIRAKRLAIGIAALAWSTGAVMASEHWPDLPVGIKNGAAARIGNMAYVGLGSAGTDFYALDLNNPSKGWVKRANFIGPATNGAAMAAAGGKIFAFSGNGKATPDAKSPIIFDTAYVYDPGSDGWSKLDTQTPVGLSGAKAVGLADGRIAIFGGYNKELFDKYLADVGAIDKDKEPEAYRKLVDSYMGMKPEAYRWNDEVLVYDPAGNNWGSLGANPFLPNCDPAMATMGEGDFLLVSGEIKPGLRTPEAKLVKIRDGAAHWQKVSDLPPLSGSEPQEGVAGAYAGKAGDDVLVAGGANFKGAQANAAAGKWFAHDGLAKSWRDDVYAFDGKDWKVAGKLPRGLAYGAAFDAPGGLLVVGGEDRDGKARKEVFLLKWDGKALSVEN.

Positions 1-26 (MFSLIRAKRLAIGIAALAWSTGAVMA) are cleaved as a signal peptide. Kelch repeat units lie at residues 48–92 (MAYV…AAAG), 94–147 (KIFA…VGLA), 149–186 (GRIAIFGGYNKELFDKYLADVGAIDKDKEPEAYRKLVD), 187–232 (SYMG…ATMG), 236–285 (FLLV…VAGA), 307–356 (ANAA…DAPG), and 358–387 (LLVVGGEDRDGKARKEVFLLKWDGKALSVE). E242 (proton acceptor) is an active-site residue.

This sequence belongs to the NanM family. As to quaternary structure, homodimer.

Its subcellular location is the periplasm. The catalysed reaction is N-acetyl-alpha-neuraminate = N-acetyl-beta-neuraminate. In terms of biological role, converts alpha-N-acetylneuranimic acid (Neu5Ac) to the beta-anomer, accelerating the equilibrium between the alpha- and beta-anomers. Probably facilitates sialidase-negative bacteria to compete successfully for limited amounts of extracellular Neu5Ac, which is likely taken up in the beta-anomer. In addition, the rapid removal of sialic acid from solution might be advantageous to the bacterium to damp down host responses. The chain is N-acetylneuraminate epimerase from Brucella melitensis biotype 1 (strain ATCC 23456 / CCUG 17765 / NCTC 10094 / 16M).